The primary structure comprises 96 residues: Co-chaperonin GroES (96 aa).

This sequence belongs to the GroES chaperonin family. As to quaternary structure, heptamer of 7 subunits arranged in a ring. Interacts with the chaperonin GroEL.

Its subcellular location is the cytoplasm. Its function is as follows. Together with the chaperonin GroEL, plays an essential role in assisting protein folding. The GroEL-GroES system forms a nano-cage that allows encapsulation of the non-native substrate proteins and provides a physical environment optimized to promote and accelerate protein folding. GroES binds to the apical surface of the GroEL ring, thereby capping the opening of the GroEL channel. The protein is Co-chaperonin GroES of Thioalkalivibrio sulfidiphilus (strain HL-EbGR7).